We begin with the raw amino-acid sequence, 120 residues long: ATP-dependent Clp protease adapter protein ClpS (120 aa).

It belongs to the ClpS family. Binds to the N-terminal domain of the chaperone ClpA.

Involved in the modulation of the specificity of the ClpAP-mediated ATP-dependent protein degradation. This Azotobacter vinelandii (strain DJ / ATCC BAA-1303) protein is ATP-dependent Clp protease adapter protein ClpS.